The following is a 213-amino-acid chain: uncharacterized protein (213 aa).

Transmembrane regions (helical) follow at residues 26–46, 112–132, and 136–156; these read FINF…GLKV, ASYI…AGIW, and AGLA…SFLI.

It localises to the cell membrane. This is an uncharacterized protein from Haemophilus influenzae (strain ATCC 51907 / DSM 11121 / KW20 / Rd).